A 518-amino-acid chain; its full sequence is ATPase expression protein 2, mitochondrial (518 aa).

The transit peptide at 1–15 (MLKKSRVLGKIPIPY) directs the protein to the mitochondrion.

It belongs to the AEP2 family. In terms of assembly, binds to the 5'UTR of the OLI1 mRNA.

Its subcellular location is the mitochondrion. Functionally, required for translation of the mitochondrial OLI1 transcript coding for the mitochondrial ATP synthase subunit 9. This Kluyveromyces lactis (strain ATCC 8585 / CBS 2359 / DSM 70799 / NBRC 1267 / NRRL Y-1140 / WM37) (Yeast) protein is ATPase expression protein 2, mitochondrial (AEP2).